A 491-amino-acid chain; its full sequence is Probable Xaa-Pro aminopeptidase An01g13040 (491 aa).

4 residues coordinate Mn(2+): D276, D287, E420, and E459.

It belongs to the peptidase M24B family. Mn(2+) is required as a cofactor.

It carries out the reaction Release of any N-terminal amino acid, including proline, that is linked to proline, even from a dipeptide or tripeptide.. Catalyzes the removal of a penultimate prolyl residue from the N-termini of peptides. The sequence is that of Probable Xaa-Pro aminopeptidase An01g13040 from Aspergillus niger (strain ATCC MYA-4892 / CBS 513.88 / FGSC A1513).